The following is a 73-amino-acid chain: Venom peptide La1 (73 aa).

The residue at position 73 (lysine 73) is a Lysine amide.

This sequence belongs to the scorpion La1-like peptide family. Post-translationally, contains 4 disulfide bonds. As to expression, expressed by the venom gland.

The protein localises to the secreted. Functionally, not toxic to insect. In Liocheles australasiae (Dwarf wood scorpion), this protein is Venom peptide La1.